The following is a 175-amino-acid chain: Ribulose bisphosphate carboxylase small subunit, chloroplastic (175 aa).

A chloroplast-targeting transit peptide spans 1–34; the sequence is MSFATTNKTIVPCATTKQIVRPRFLSNGTISKSR.

This sequence belongs to the RuBisCO small chain family. Heterohexadecamer of 8 large and 8 small subunits.

The protein resides in the plastid. It localises to the chloroplast. In terms of biological role, ruBisCO catalyzes two reactions: the carboxylation of D-ribulose 1,5-bisphosphate, the primary event in carbon dioxide fixation, as well as the oxidative fragmentation of the pentose substrate. Both reactions occur simultaneously and in competition at the same active site. Although the small subunit is not catalytic it is essential for maximal activity. This is Ribulose bisphosphate carboxylase small subunit, chloroplastic from Batophora oerstedii (Green alga).